The sequence spans 152 residues: Perlwapin (152 aa).

The first 18 residues, L1–G18, serve as a signal peptide directing secretion. The WAP 1 domain maps to Y19–V61. Intrachain disulfides connect C26–C52, C35–C56, C39–C51, C45–C60, C69–C95, C77–C100, C82–C94, C88–C103, C112–C139, C122–C142, C126–C138, and C132–C146. Residues P62 to K107 enclose the WAP 2; atypical domain. The WAP 3 domain occupies K108–C150.

In terms of tissue distribution, component of the acid-soluble and acid-insoluble organic matrix of prismatic shell layers (at protein level).

The protein localises to the secreted. Inhibits growth of calcium carbonate crystals. May inhibit growth of certain crystallographic planes in the mineral phase of nacre in the shell. The polypeptide is Perlwapin (Haliotis asinina (Donkey's ear abalone)).